The sequence spans 534 residues: Coiled-coil domain-containing protein 183 (534 aa).

3 coiled-coil regions span residues 10–54 (EEQT…NIRR), 136–209 (DASK…DMKI), and 323–396 (LAQR…HSNM).

This Homo sapiens (Human) protein is Coiled-coil domain-containing protein 183 (CCDC183).